We begin with the raw amino-acid sequence, 298 residues long: N-acetylmuramic acid 6-phosphate etherase (298 aa).

An SIS domain is found at 55–218 (IHAQVSGGGR…STGLMIKSGK (164 aa)). E83 (proton donor) is an active-site residue. E114 is a catalytic residue.

Belongs to the GCKR-like family. MurNAc-6-P etherase subfamily. As to quaternary structure, homodimer.

The catalysed reaction is N-acetyl-D-muramate 6-phosphate + H2O = N-acetyl-D-glucosamine 6-phosphate + (R)-lactate. The protein operates within amino-sugar metabolism; 1,6-anhydro-N-acetylmuramate degradation. It functions in the pathway amino-sugar metabolism; N-acetylmuramate degradation. Its pathway is cell wall biogenesis; peptidoglycan recycling. Specifically catalyzes the cleavage of the D-lactyl ether substituent of MurNAc 6-phosphate, producing GlcNAc 6-phosphate and D-lactate. Together with AnmK, is also required for the utilization of anhydro-N-acetylmuramic acid (anhMurNAc) either imported from the medium or derived from its own cell wall murein, and thus plays a role in cell wall recycling. This Shigella boydii serotype 18 (strain CDC 3083-94 / BS512) protein is N-acetylmuramic acid 6-phosphate etherase.